The chain runs to 239 residues: Dephospho-CoA kinase (239 aa).

Residues 3 to 206 enclose the DPCK domain; sequence IIGLTGSIAS…GGEGGEPAAG (204 aa). ATP is bound at residue 11–16; sequence ASGKST. The segment at 197–239 is disordered; that stretch reads GGEGGEPAAGSSAHHGAGSVDPGAGPCDGPGAAPEAERRGGDR. Over residues 204-230 the composition is skewed to low complexity; sequence AAGSSAHHGAGSVDPGAGPCDGPGAAP.

It belongs to the CoaE family.

Its subcellular location is the cytoplasm. The catalysed reaction is 3'-dephospho-CoA + ATP = ADP + CoA + H(+). Its pathway is cofactor biosynthesis; coenzyme A biosynthesis; CoA from (R)-pantothenate: step 5/5. Functionally, catalyzes the phosphorylation of the 3'-hydroxyl group of dephosphocoenzyme A to form coenzyme A. The protein is Dephospho-CoA kinase of Symbiobacterium thermophilum (strain DSM 24528 / JCM 14929 / IAM 14863 / T).